Consider the following 35-residue polypeptide: GYCAEKGIRCDDIHCCTGLKCKCNASGYNCVCRKK.

4 cysteine pairs are disulfide-bonded: Cys-3/Cys-16, Cys-10/Cys-21, Cys-15/Cys-32, and Cys-23/Cys-30.

This sequence belongs to the neurotoxin 33 family. In terms of tissue distribution, expressed by the venom gland.

Its subcellular location is the secreted. Functionally, inhibits P2RX3 receptors. Has an analgesic effect in rat. Enhances the high-affinity desensitization of P2RX3 purinoceptors. At 50 nM, decreases the IC(50) for ambient ATP from 46.5 nM to 12.7 nM in mouse P2RX3. In Alopecosa marikovskyi (Wolf spider), this protein is Purotoxin-1.